A 406-amino-acid chain; its full sequence is Pyridinium-3,5-bisthiocarboxylic acid mononucleotide nickel insertion protein (406 aa).

It belongs to the LarC family.

The catalysed reaction is Ni(II)-pyridinium-3,5-bisthiocarboxylate mononucleotide = pyridinium-3,5-bisthiocarboxylate mononucleotide + Ni(2+). Involved in the biosynthesis of a nickel-pincer cofactor ((SCS)Ni(II) pincer complex). Binds Ni(2+), and functions in nickel delivery to pyridinium-3,5-bisthiocarboxylic acid mononucleotide (P2TMN), to form the mature cofactor. Is thus probably required for the activation of nickel-pincer cofactor-dependent enzymes. This is Pyridinium-3,5-bisthiocarboxylic acid mononucleotide nickel insertion protein from Akkermansia muciniphila (strain ATCC BAA-835 / DSM 22959 / JCM 33894 / BCRC 81048 / CCUG 64013 / CIP 107961 / Muc).